The sequence spans 319 residues: Cobalamin biosynthesis protein CobD (319 aa).

The next 3 helical transmembrane spans lie at 54 to 76 (VLLL…WLSY), 154 to 173 (GVTA…ALLY), and 301 to 318 (VLGF…IYAI).

It belongs to the CobD/CbiB family.

It localises to the cell membrane. The protein operates within cofactor biosynthesis; adenosylcobalamin biosynthesis. In terms of biological role, converts cobyric acid to cobinamide by the addition of aminopropanol on the F carboxylic group. The sequence is that of Cobalamin biosynthesis protein CobD from Halalkalibacterium halodurans (strain ATCC BAA-125 / DSM 18197 / FERM 7344 / JCM 9153 / C-125) (Bacillus halodurans).